The chain runs to 359 residues: 4-dedimethylamino-4-oxo-anhydrotetracycline transaminase OxyQ (359 aa).

Substrate is bound by residues G32, K92, and N155. Residues T91–K92, N155, Y186, and S216–S218 contribute to the pyridoxal 5'-phosphate site. N6-(pyridoxal phosphate)lysine is present on K219. R227 provides a ligand contact to pyridoxal 5'-phosphate. Substrate is bound at residue R341.

The protein belongs to the class-I pyridoxal-phosphate-dependent aminotransferase family. It depends on pyridoxal 5'-phosphate as a cofactor.

It functions in the pathway antibiotic biosynthesis; oxytetracycline biosynthesis. Its function is as follows. Involved in the biosynthesis of the tetracycline antibiotic, oxytetracycline. Catalyzes the conversion of 4-dedimethylamino-4-oxoanhydrotetracycline to yield 4-amino-4-de(dimethylamino)anhydrotetracycline (4-amino-ATC). This is 4-dedimethylamino-4-oxo-anhydrotetracycline transaminase OxyQ from Streptomyces rimosus.